We begin with the raw amino-acid sequence, 503 residues long: V-type proton ATPase subunit B (503 aa).

R378 lines the ATP pocket. Residues S491, S492, S502, and S503 each carry the phosphoserine modification.

Belongs to the ATPase alpha/beta chains family. In terms of assembly, V-ATPase is a heteromultimeric enzyme composed of a peripheral catalytic V1 complex (components A to H) attached to an integral membrane V0 proton pore complex (components: a, c, c', c'', d, e, f and VOA1). Interacts with rav1.

It localises to the vacuole membrane. Functionally, non-catalytic subunit of the V1 complex of vacuolar(H+)-ATPase (V-ATPase), a multisubunit enzyme composed of a peripheral complex (V1) that hydrolyzes ATP and a membrane integral complex (V0) that translocates protons. V-ATPase is responsible for acidifying and maintaining the pH of intracellular compartments. The sequence is that of V-type proton ATPase subunit B from Schizosaccharomyces pombe (strain 972 / ATCC 24843) (Fission yeast).